We begin with the raw amino-acid sequence, 37 residues long: Large ribosomal subunit protein bL36 (37 aa).

It belongs to the bacterial ribosomal protein bL36 family.

The polypeptide is Large ribosomal subunit protein bL36 (Azoarcus sp. (strain BH72)).